The primary structure comprises 961 residues: Phosphofurin acidic cluster sorting protein 1 (961 aa).

Gly residues predominate over residues 1-19; it reads MAERGGAGGGPGGAGGGSS. Disordered stretches follow at residues 1 to 70 and 76 to 95; these read MAER…SSST and VAVASGSAPPGGPGPGRTPA. At A2 the chain carries N-acetylalanine. Residues 20-30 show a composition bias toward low complexity; the sequence is QRGSGVAQSPQ. S28 bears the Phosphoserine mark. Residues 31–46 show a composition bias toward pro residues; the sequence is QQPPQQPSQPQQPTPP. The residue at position 44 (T44) is a Phosphothreonine. The span at 51–70 shows a compositional bias: low complexity; that stretch reads ATSSSSSTSAAAASSSSSST. The residue at position 249 (Y249) is a Phosphotyrosine. The segment covering 260 to 271 has biased composition (basic and acidic residues); it reads GIKSKLSDRSPD. Disordered regions lie at residues 260-297 and 375-426; these read GIKSKLSDRSPDIDNYSEEEEESFSSEQEGSDDPLHGQ and NPSD…GKDT. Residues 274 to 291 show a composition bias toward acidic residues; that stretch reads NYSEEEEESFSSEQEGSD. Residues 351–375 are a coiled coil; sequence HVSREQIREVEEDLDELYDSLEMYN. 2 positions are modified to phosphoserine: S377 and S379. The segment covering 404 to 426 has biased composition (polar residues); that stretch reads MSQSSSQTEIGSLNSKGSLGKDT. 2 positions are modified to phosphoserine: S428 and S493. 2 disordered regions span residues 475–540 and 758–802; these read EKVK…HSTQ and SPST…SMSS. T502 bears the Phosphothreonine mark. A phosphoserine mark is found at S517, S526, S527, S529, and S532. The span at 768-802 shows a compositional bias: low complexity; sequence SPVVSLTVPSTSPPSSSGLSRDATATPPSSPSMSS.

Belongs to the PACS family. As to quaternary structure, associates with AP-1 and AP-3 but not with AP-2 complexes. Interacts with FURIN. Forms a ternary complex with furin and AP-1. Interacts with PKD2 (via acidic region). Interacts with SORL1. Interacts with WDR37.

It localises to the golgi apparatus. The protein resides in the trans-Golgi network. Its function is as follows. Coat protein that is involved in the localization of trans-Golgi network (TGN) membrane proteins that contain acidic cluster sorting motifs. Controls the endosome-to-Golgi trafficking of furin and mannose-6-phosphate receptor by connecting the acidic-cluster-containing cytoplasmic domain of these molecules with the adapter-protein complex-1 (AP-1) of endosomal clathrin-coated membrane pits. Required for normal ER Ca2+ handling in lymphocytes. Together with WDR37, it plays an essential role in lymphocyte development, quiescence and survival. Required for stabilizing peripheral lymphocyte populations. The sequence is that of Phosphofurin acidic cluster sorting protein 1 (Pacs1) from Rattus norvegicus (Rat).